A 152-amino-acid chain; its full sequence is D-aminoacyl-tRNA deacylase (152 aa).

Residues 142-143 (GP) carry the Gly-cisPro motif, important for rejection of L-amino acids motif.

The protein belongs to the DTD family. Homodimer.

Its subcellular location is the cytoplasm. The catalysed reaction is glycyl-tRNA(Ala) + H2O = tRNA(Ala) + glycine + H(+). It catalyses the reaction a D-aminoacyl-tRNA + H2O = a tRNA + a D-alpha-amino acid + H(+). Its function is as follows. An aminoacyl-tRNA editing enzyme that deacylates mischarged D-aminoacyl-tRNAs. Also deacylates mischarged glycyl-tRNA(Ala), protecting cells against glycine mischarging by AlaRS. Acts via tRNA-based rather than protein-based catalysis; rejects L-amino acids rather than detecting D-amino acids in the active site. By recycling D-aminoacyl-tRNA to D-amino acids and free tRNA molecules, this enzyme counteracts the toxicity associated with the formation of D-aminoacyl-tRNA entities in vivo and helps enforce protein L-homochirality. The chain is D-aminoacyl-tRNA deacylase from Paraburkholderia phytofirmans (strain DSM 17436 / LMG 22146 / PsJN) (Burkholderia phytofirmans).